A 194-amino-acid chain; its full sequence is MIGRLRGVLTSKTPPWLVVDVCGVGYELEVPMSTFYELPNVGYEVNLFTHYTQKDDSAALYGFLSESERRLFRHLQRVSGIGTKIALAVLSSVSVDTFAGLIQAGDVNALTVIPGIGKKTAERMLVELRDRAADFNNGISTSGKLNLDTVSEAALALQQLGYKPAEAARMARDAGTESDDVASVIKKALQAALR.

The interval 1-64 (MIGRLRGVLT…DDSAALYGFL (64 aa)) is domain I. Positions 65 to 140 (SESERRLFRH…RAADFNNGIS (76 aa)) are domain II. The segment at 140–144 (STSGK) is flexible linker. The segment at 145–194 (LNLDTVSEAALALQQLGYKPAEAARMARDAGTESDDVASVIKKALQAALR) is domain III.

The protein belongs to the RuvA family. Homotetramer. Forms an RuvA(8)-RuvB(12)-Holliday junction (HJ) complex. HJ DNA is sandwiched between 2 RuvA tetramers; dsDNA enters through RuvA and exits via RuvB. An RuvB hexamer assembles on each DNA strand where it exits the tetramer. Each RuvB hexamer is contacted by two RuvA subunits (via domain III) on 2 adjacent RuvB subunits; this complex drives branch migration. In the full resolvosome a probable DNA-RuvA(4)-RuvB(12)-RuvC(2) complex forms which resolves the HJ.

The protein localises to the cytoplasm. Functionally, the RuvA-RuvB-RuvC complex processes Holliday junction (HJ) DNA during genetic recombination and DNA repair, while the RuvA-RuvB complex plays an important role in the rescue of blocked DNA replication forks via replication fork reversal (RFR). RuvA specifically binds to HJ cruciform DNA, conferring on it an open structure. The RuvB hexamer acts as an ATP-dependent pump, pulling dsDNA into and through the RuvAB complex. HJ branch migration allows RuvC to scan DNA until it finds its consensus sequence, where it cleaves and resolves the cruciform DNA. This chain is Holliday junction branch migration complex subunit RuvA, found in Xylella fastidiosa (strain 9a5c).